Reading from the N-terminus, the 772-residue chain is TBC domain-containing protein C4G8.04 (772 aa).

Positions 143-161 (SFFPSSQEPSIPENPSSLT) are enriched in polar residues. Disordered regions lie at residues 143–163 (SFFP…LTGE) and 275–294 (KFFR…TFVS). Over residues 275–291 (KFFRSSPRCSTPSVSST) the composition is skewed to low complexity. The residue at position 395 (Thr-395) is a Phosphothreonine. Positions 504 to 693 (GVPLCYKAKV…RIFDMLFCDG (190 aa)) constitute a Rab-GAP TBC domain.

The sequence is that of TBC domain-containing protein C4G8.04 from Schizosaccharomyces pombe (strain 972 / ATCC 24843) (Fission yeast).